Reading from the N-terminus, the 1130-residue chain is DNA-directed RNA polymerase I subunit rpa2 (1130 aa).

The C4-type zinc-finger motif lies at 1070-1096 (CKLCGSTLTIYSKKDYSNQTVSECKSC).

This sequence belongs to the RNA polymerase beta chain family. As to quaternary structure, component of the RNA polymerase I (Pol I) complex consisting of 14 subunits.

Its subcellular location is the nucleus. The protein resides in the nucleolus. It carries out the reaction RNA(n) + a ribonucleoside 5'-triphosphate = RNA(n+1) + diphosphate. Its function is as follows. DNA-dependent RNA polymerase catalyzes the transcription of DNA into RNA using the four ribonucleoside triphosphates as substrates. Second largest core component of RNA polymerase I which synthesizes ribosomal RNA precursors. Proposed to contribute to the polymerase catalytic activity and forms the polymerase active center together with the largest subunit. Pol I is composed of mobile elements and RPA2 is part of the core element with the central large cleft and probably a clamp element that moves to open and close the cleft. The protein is DNA-directed RNA polymerase I subunit rpa2 (polr1b) of Dictyostelium discoideum (Social amoeba).